Consider the following 291-residue polypeptide: Transmembrane protein 41B (291 aa).

Basic and acidic residues predominate over residues 1 to 11 (MAKGRVAERSQ). Residues 1–38 (MAKGRVAERSQTEMLHSTPAGDRAVGTQGSAAPGNKDH) are disordered. T18 is subject to Phosphothreonine. 6 helical membrane passes run 52-72 (TSLLILVSIFSCAAFVMFLVY), 109-129 (FYVQVLVAYFATYIFLQTFAI), 147-169 (LALFLVCLCSGLGASFCYMLSYL), 197-217 (LINYIIFLRITPFLPNWFINI), 225-245 (PLKVFFIGTFLGVAPPSFVAI), and 262-282 (SWNSVFILMILALLSILPAIF). The segment at 140–251 (GFLYPFPLAL…FVAIKAGTTL (112 aa)) is VTT domain; required for its function in autophagy.

Belongs to the TMEM41 family. Interacts with VMP1. Interacts with COPA, COPB1, VDAC1 and ERLIN2. Interacts with ATG2A. Interacts with SURF4.

The protein resides in the endoplasmic reticulum membrane. It is found in the endomembrane system. The catalysed reaction is a 1,2-diacyl-sn-glycero-3-phospho-L-serine(in) = a 1,2-diacyl-sn-glycero-3-phospho-L-serine(out). It carries out the reaction cholesterol(in) = cholesterol(out). It catalyses the reaction a 1,2-diacyl-sn-glycero-3-phosphocholine(in) = a 1,2-diacyl-sn-glycero-3-phosphocholine(out). The enzyme catalyses a 1,2-diacyl-sn-glycero-3-phosphoethanolamine(in) = a 1,2-diacyl-sn-glycero-3-phosphoethanolamine(out). Its function is as follows. Phospholipid scramblase involved in lipid homeostasis and membrane dynamics processes. Has phospholipid scramblase activity toward cholesterol and phosphatidylserine, as well as phosphatidylethanolamine and phosphatidylcholine. Required for autophagosome formation: participates in early stages of autophagosome biogenesis at the endoplasmic reticulum (ER) membrane by reequilibrating the leaflets of the ER as lipids are extracted by ATG2 (ATG2A or ATG2B) to mediate autophagosome assembly. In addition to autophagy, involved in other processes in which phospholipid scramblase activity is required. Required for normal motor neuron development. This Rattus norvegicus (Rat) protein is Transmembrane protein 41B.